The following is a 705-amino-acid chain: MARITPIAYYRNIGISAHIDAGKTTTTERILFYTGVNHKIGEVHHGAATMDWMAQEQERGITITSAATTCFWSGMAKQFNAHRINIIDTPGHVDFTIEVERSMRILDGVVMIYCAVGGVQPQSETVWRQANKYKVPRIAFVNKMDRMGANYLRVVEQIRTRLSAKPVPIQLAIGAEENFTGVIDLVKMKAIHWNEADQGISFTYGNIPTEMLDLAEKWHQNLVEIAVEASTELMEKYLNSEIISEEEIKASLRQLVLNNDIILVTCGSAFKNKGVQALLDAVIEYLPAPTDVSIVNRMLTVENKQTKIYDNSLSSDKAPFSALAFKIATDPFVGNLTFFRVYSGMVSSGDMVFNSVKEKRERFGRIVQMHANKREEIKEVHAGDIAAAIGLKDVTTGDTLCDPEAPIILEKMDFPEPVISVAVEPKTKADQEKMGFALNRLAQEDPSFHVWIDEESGETIIAGMGELHLEILIDRMRREFNVLANVGKPQVAYRETIRVTVEQEGKFIRQSGGRGQFGHVWLRIEPMEPGGKTYEFLNEIVGGVIPKEYLPAVDKGIQEQLKSGILAGYPIVDVRVAVFDGSYHEVDSSEMAFKLAASIAFKEGFMKAKPILLEPIMQVEVETPEDYMGDVIGDLNRRRGIINGMIDNTTGKTIRVQVPLSEMFGYATDLRSQTQGRASYTMEFLKYHEVPSHVVQTIIEAHQTK.

In terms of domain architecture, tr-type G spans 8-290; it reads AYYRNIGISA…AVIEYLPAPT (283 aa). GTP-binding positions include 17-24, 88-92, and 142-145; these read AHIDAGKT, DTPGH, and NKMD.

The protein belongs to the TRAFAC class translation factor GTPase superfamily. Classic translation factor GTPase family. EF-G/EF-2 subfamily.

The protein resides in the cytoplasm. Functionally, catalyzes the GTP-dependent ribosomal translocation step during translation elongation. During this step, the ribosome changes from the pre-translocational (PRE) to the post-translocational (POST) state as the newly formed A-site-bound peptidyl-tRNA and P-site-bound deacylated tRNA move to the P and E sites, respectively. Catalyzes the coordinated movement of the two tRNA molecules, the mRNA and conformational changes in the ribosome. The polypeptide is Elongation factor G (Baumannia cicadellinicola subsp. Homalodisca coagulata).